A 494-amino-acid chain; its full sequence is Guanosine-5'-triphosphate,3'-diphosphate pyrophosphatase (494 aa).

This sequence belongs to the GppA/Ppx family. GppA subfamily.

The enzyme catalyses guanosine 3'-diphosphate 5'-triphosphate + H2O = guanosine 3',5'-bis(diphosphate) + phosphate + H(+). The protein operates within purine metabolism; ppGpp biosynthesis; ppGpp from GTP: step 2/2. Functionally, catalyzes the conversion of pppGpp to ppGpp. Guanosine pentaphosphate (pppGpp) is a cytoplasmic signaling molecule which together with ppGpp controls the 'stringent response', an adaptive process that allows bacteria to respond to amino acid starvation, resulting in the coordinated regulation of numerous cellular activities. This chain is Guanosine-5'-triphosphate,3'-diphosphate pyrophosphatase, found in Erwinia tasmaniensis (strain DSM 17950 / CFBP 7177 / CIP 109463 / NCPPB 4357 / Et1/99).